We begin with the raw amino-acid sequence, 196 residues long: Protein GrpE (196 aa).

Residues 1 to 26 are compositionally biased toward basic and acidic residues; it reads MQEPHNQEPIEEQKLSEMEDTLEKQH. A disordered region spans residues 1-40; sequence MQEPHNQEPIEEQKLSEMEDTLEKQHSGASTENTERAEEG.

This sequence belongs to the GrpE family. Homodimer.

Its subcellular location is the cytoplasm. Participates actively in the response to hyperosmotic and heat shock by preventing the aggregation of stress-denatured proteins, in association with DnaK and GrpE. It is the nucleotide exchange factor for DnaK and may function as a thermosensor. Unfolded proteins bind initially to DnaJ; upon interaction with the DnaJ-bound protein, DnaK hydrolyzes its bound ATP, resulting in the formation of a stable complex. GrpE releases ADP from DnaK; ATP binding to DnaK triggers the release of the substrate protein, thus completing the reaction cycle. Several rounds of ATP-dependent interactions between DnaJ, DnaK and GrpE are required for fully efficient folding. In Nitrosomonas eutropha (strain DSM 101675 / C91 / Nm57), this protein is Protein GrpE.